The sequence spans 104 residues: Co-chaperonin GroES 2 (104 aa).

It belongs to the GroES chaperonin family. Heptamer of 7 subunits arranged in a ring. Interacts with the chaperonin GroEL.

The protein localises to the cytoplasm. Functionally, together with the chaperonin GroEL, plays an essential role in assisting protein folding. The GroEL-GroES system forms a nano-cage that allows encapsulation of the non-native substrate proteins and provides a physical environment optimized to promote and accelerate protein folding. GroES binds to the apical surface of the GroEL ring, thereby capping the opening of the GroEL channel. This Rhodopseudomonas palustris (strain ATCC BAA-98 / CGA009) protein is Co-chaperonin GroES 2.